The chain runs to 327 residues: Phenylalanine--tRNA ligase alpha subunit (327 aa).

Glu-252 contributes to the Mg(2+) binding site.

This sequence belongs to the class-II aminoacyl-tRNA synthetase family. Phe-tRNA synthetase alpha subunit type 1 subfamily. As to quaternary structure, tetramer of two alpha and two beta subunits. Mg(2+) is required as a cofactor.

The protein resides in the cytoplasm. The catalysed reaction is tRNA(Phe) + L-phenylalanine + ATP = L-phenylalanyl-tRNA(Phe) + AMP + diphosphate + H(+). This Serratia proteamaculans (strain 568) protein is Phenylalanine--tRNA ligase alpha subunit.